A 328-amino-acid chain; its full sequence is uncharacterized protein (328 aa).

A signal peptide spans 1 to 32 (MFNFRLFSRRGKSLGLLAIVLLLFGFYSLKSS).

It belongs to the glycosyltransferase 34 family.

The protein resides in the endoplasmic reticulum. This is an uncharacterized protein from Schizosaccharomyces pombe (strain 972 / ATCC 24843) (Fission yeast).